The primary structure comprises 99 residues: Small ribosomal subunit protein uS14c (99 aa).

Residues 46–66 are disordered; sequence LQSSPRNSAPTRLHRRCSSTG.

Belongs to the universal ribosomal protein uS14 family. Part of the 30S ribosomal subunit.

It localises to the plastid. The protein localises to the chloroplast. Binds 16S rRNA, required for the assembly of 30S particles. The chain is Small ribosomal subunit protein uS14c from Pinus thunbergii (Japanese black pine).